The following is a 205-amino-acid chain: Holliday junction branch migration complex subunit RuvA (205 aa).

The segment at 1–64 is domain I; the sequence is MIGKLTGLVD…EDAIRLFGFP (64 aa). The interval 65–143 is domain II; the sequence is SEVERDWFRL…ALGPVDSLTA (79 aa). Residues 144 to 153 form a flexible linker region; the sequence is KLTIAEAEGT. The interval 153-205 is domain III; sequence TAPVAAQDAITALVNLGYGRPQAAAAVATSLEALGETAPLADLIRRGLKELAR.

The protein belongs to the RuvA family. Homotetramer. Forms an RuvA(8)-RuvB(12)-Holliday junction (HJ) complex. HJ DNA is sandwiched between 2 RuvA tetramers; dsDNA enters through RuvA and exits via RuvB. An RuvB hexamer assembles on each DNA strand where it exits the tetramer. Each RuvB hexamer is contacted by two RuvA subunits (via domain III) on 2 adjacent RuvB subunits; this complex drives branch migration. In the full resolvosome a probable DNA-RuvA(4)-RuvB(12)-RuvC(2) complex forms which resolves the HJ.

It localises to the cytoplasm. Its function is as follows. The RuvA-RuvB-RuvC complex processes Holliday junction (HJ) DNA during genetic recombination and DNA repair, while the RuvA-RuvB complex plays an important role in the rescue of blocked DNA replication forks via replication fork reversal (RFR). RuvA specifically binds to HJ cruciform DNA, conferring on it an open structure. The RuvB hexamer acts as an ATP-dependent pump, pulling dsDNA into and through the RuvAB complex. HJ branch migration allows RuvC to scan DNA until it finds its consensus sequence, where it cleaves and resolves the cruciform DNA. The protein is Holliday junction branch migration complex subunit RuvA of Beijerinckia indica subsp. indica (strain ATCC 9039 / DSM 1715 / NCIMB 8712).